The primary structure comprises 166 residues: Urocortin-3 (166 aa).

The signal sequence occupies residues 1–23 (MLVPAPFLLVLLLLLGAPQVGLS). Positions 24-123 (QRSPKAGSSP…QDKAKSDRRT (100 aa)) are excised as a propeptide. Positions 41 to 51 (REAEKSQRKDT) are enriched in basic and acidic residues. Residues 41-123 (REAEKSQRKD…QDKAKSDRRT (83 aa)) are disordered. Over residues 68–77 (EDQEGQEEED) the composition is skewed to acidic residues. Residues 86–96 (SVGGGGGGGAG) show a composition bias toward gly residues. Basic and acidic residues predominate over residues 113 to 123 (SQDKAKSDRRT). An Isoleucine amide modification is found at Ile162.

It belongs to the sauvagine/corticotropin-releasing factor/urotensin I family. As to quaternary structure, binds with high affinity to CRF receptors 2-alpha and 2-beta.

The protein localises to the secreted. In terms of biological role, suppresses food intake, delays gastric emptying and decreases heat-induced edema. Might represent an endogenous ligand for maintaining homeostasis after stress. In Bos taurus (Bovine), this protein is Urocortin-3 (UCN3).